The primary structure comprises 217 residues: Cytidylate kinase (217 aa).

Position 9–17 (9–17 (GPSSSGKSS)) interacts with ATP.

It belongs to the cytidylate kinase family. Type 1 subfamily.

The protein resides in the cytoplasm. The catalysed reaction is CMP + ATP = CDP + ADP. It catalyses the reaction dCMP + ATP = dCDP + ADP. This chain is Cytidylate kinase, found in Mycoplasma pneumoniae (strain ATCC 29342 / M129 / Subtype 1) (Mycoplasmoides pneumoniae).